The chain runs to 380 residues: Homoserine O-succinyltransferase (380 aa).

The region spanning 51–362 (NAVLICHALS…SKHGHDAFLL (312 aa)) is the AB hydrolase-1 domain. Ser157 serves as the catalytic Nucleophile. Arg227 contacts substrate. Active-site residues include Asp324 and His357. Substrate is bound at residue Asp358.

The protein belongs to the AB hydrolase superfamily. MetX family. As to quaternary structure, homodimer.

The protein resides in the cytoplasm. The catalysed reaction is L-homoserine + succinyl-CoA = O-succinyl-L-homoserine + CoA. The protein operates within amino-acid biosynthesis; L-methionine biosynthesis via de novo pathway; O-succinyl-L-homoserine from L-homoserine: step 1/1. Its function is as follows. Transfers a succinyl group from succinyl-CoA to L-homoserine, forming succinyl-L-homoserine. This Cellvibrio japonicus (strain Ueda107) (Pseudomonas fluorescens subsp. cellulosa) protein is Homoserine O-succinyltransferase.